Consider the following 495-residue polypeptide: ATP synthase subunit beta, chloroplastic (495 aa).

172-179 (GGAGVGKT) contacts ATP.

The protein belongs to the ATPase alpha/beta chains family. In terms of assembly, F-type ATPases have 2 components, CF(1) - the catalytic core - and CF(0) - the membrane proton channel. CF(1) has five subunits: alpha(3), beta(3), gamma(1), delta(1), epsilon(1). CF(0) has four main subunits: a(1), b(1), b'(1) and c(9-12).

Its subcellular location is the plastid. It localises to the chloroplast thylakoid membrane. The catalysed reaction is ATP + H2O + 4 H(+)(in) = ADP + phosphate + 5 H(+)(out). Its function is as follows. Produces ATP from ADP in the presence of a proton gradient across the membrane. The catalytic sites are hosted primarily by the beta subunits. This chain is ATP synthase subunit beta, chloroplastic, found in Hyacinthus orientalis (Common hyacinth).